The following is a 419-amino-acid chain: D-inositol 3-phosphate glycosyltransferase (419 aa).

Position 9 (His9) interacts with 1D-myo-inositol 3-phosphate. UDP-N-acetyl-alpha-D-glucosamine-binding positions include 15–16 (QP) and Gly23. Residues 20–25 (DAGGMN), Lys78, Tyr110, Thr134, and Arg154 each bind 1D-myo-inositol 3-phosphate. Residues Arg231, Lys236, and Arg295 each coordinate UDP-N-acetyl-alpha-D-glucosamine. The Mg(2+) site is built by Tyr304, Arg305, and Ala307. Glu317 and Glu325 together coordinate UDP-N-acetyl-alpha-D-glucosamine. Mg(2+) is bound at residue Thr331.

This sequence belongs to the glycosyltransferase group 1 family. MshA subfamily. Homodimer.

The enzyme catalyses 1D-myo-inositol 3-phosphate + UDP-N-acetyl-alpha-D-glucosamine = 1D-myo-inositol 2-acetamido-2-deoxy-alpha-D-glucopyranoside 3-phosphate + UDP + H(+). In terms of biological role, catalyzes the transfer of a N-acetyl-glucosamine moiety to 1D-myo-inositol 3-phosphate to produce 1D-myo-inositol 2-acetamido-2-deoxy-glucopyranoside 3-phosphate in the mycothiol biosynthesis pathway. This chain is D-inositol 3-phosphate glycosyltransferase, found in Corynebacterium jeikeium (strain K411).